A 194-amino-acid chain; its full sequence is MISSLNGILEASGKDWAVINVSGVGFRCYMPATSPALIGGLGQRVRVFTHLHVREDALSLFGFATTEELSLFETLIDVSGIGPKLGLAMLSVMNAEALASAIISGNAELLSTIPGIGKKTSSRIILELKDKIAKNWEAGVLSQVTEANSDILATLTALGYSSSEAAKAISSLGDNGDLPLEERIKLALNYFNNK.

The segment at 1–64 (MISSLNGILE…EDALSLFGFA (64 aa)) is domain I. Residues 65–143 (TTEELSLFET…KNWEAGVLSQ (79 aa)) form a domain II region. Residues 144–149 (VTEANS) are flexible linker. Positions 149 to 194 (SDILATLTALGYSSSEAAKAISSLGDNGDLPLEERIKLALNYFNNK) are domain III.

Belongs to the RuvA family. Homotetramer. Forms an RuvA(8)-RuvB(12)-Holliday junction (HJ) complex. HJ DNA is sandwiched between 2 RuvA tetramers; dsDNA enters through RuvA and exits via RuvB. An RuvB hexamer assembles on each DNA strand where it exits the tetramer. Each RuvB hexamer is contacted by two RuvA subunits (via domain III) on 2 adjacent RuvB subunits; this complex drives branch migration. In the full resolvosome a probable DNA-RuvA(4)-RuvB(12)-RuvC(2) complex forms which resolves the HJ.

The protein localises to the cytoplasm. Functionally, the RuvA-RuvB-RuvC complex processes Holliday junction (HJ) DNA during genetic recombination and DNA repair, while the RuvA-RuvB complex plays an important role in the rescue of blocked DNA replication forks via replication fork reversal (RFR). RuvA specifically binds to HJ cruciform DNA, conferring on it an open structure. The RuvB hexamer acts as an ATP-dependent pump, pulling dsDNA into and through the RuvAB complex. HJ branch migration allows RuvC to scan DNA until it finds its consensus sequence, where it cleaves and resolves the cruciform DNA. This is Holliday junction branch migration complex subunit RuvA from Dehalococcoides mccartyi (strain CBDB1).